Reading from the N-terminus, the 1357-residue chain is DNA-directed RNA polymerase subunit beta (1357 aa).

The protein belongs to the RNA polymerase beta chain family. The RNAP catalytic core consists of 2 alpha, 1 beta, 1 beta' and 1 omega subunit. When a sigma factor is associated with the core the holoenzyme is formed, which can initiate transcription.

It catalyses the reaction RNA(n) + a ribonucleoside 5'-triphosphate = RNA(n+1) + diphosphate. In terms of biological role, DNA-dependent RNA polymerase catalyzes the transcription of DNA into RNA using the four ribonucleoside triphosphates as substrates. This Hahella chejuensis (strain KCTC 2396) protein is DNA-directed RNA polymerase subunit beta.